A 128-amino-acid chain; its full sequence is Aspartate 1-decarboxylase (128 aa).

Ser25 (schiff-base intermediate with substrate; via pyruvic acid) is an active-site residue. Position 25 is a pyruvic acid (Ser) (Ser25). Thr57 is a binding site for substrate. Catalysis depends on Tyr58, which acts as the Proton donor. Substrate is bound at residue 73-75 (GAA).

It belongs to the PanD family. As to quaternary structure, heterooctamer of four alpha and four beta subunits. Requires pyruvate as cofactor. In terms of processing, is synthesized initially as an inactive proenzyme, which is activated by self-cleavage at a specific serine bond to produce a beta-subunit with a hydroxyl group at its C-terminus and an alpha-subunit with a pyruvoyl group at its N-terminus.

The protein resides in the cytoplasm. It catalyses the reaction L-aspartate + H(+) = beta-alanine + CO2. It participates in cofactor biosynthesis; (R)-pantothenate biosynthesis; beta-alanine from L-aspartate: step 1/1. Its function is as follows. Catalyzes the pyruvoyl-dependent decarboxylation of aspartate to produce beta-alanine. The chain is Aspartate 1-decarboxylase from Chlorobium phaeovibrioides (strain DSM 265 / 1930) (Prosthecochloris vibrioformis (strain DSM 265)).